Reading from the N-terminus, the 859-residue chain is Envelope glycoprotein (859 aa).

Residues 1–6 (MVSIAF) constitute a propeptide that is removed on maturation. Topologically, residues 7-614 (YGGIPGGIST…KDLWSHIGNW (608 aa)) are extracellular. Residues N40, N112, N141, N148, N186, N214, N233, N244, N340, N368, N399, N406, N411, and N422 are each glycosylated (N-linked (GlcNAc...) asparagine; by host). Residues 446 to 466 (FGISAIVAAIVAATAIARSAT) are fusion peptide. N-linked (GlcNAc...) asparagine; by host glycosylation is found at N483 and N490. The segment at 498–513 (LIERQIKILYAMILQT) is immunosuppression. Residues N550 and N557 are each glycosylated (N-linked (GlcNAc...) asparagine; by host). Coiled-coil stretches lie at residues 576 to 624 (ILTT…SIIK) and 663 to 699 (KKFHHKHASREDTWDQAQHNIHLAGVTGGSGDKYYKQ). Residues 615 to 635 (IPGLGASIIKYIVMFLLIYLL) form a helical membrane-spanning segment. The Cytoplasmic portion of the chain corresponds to 636 to 859 (LTSSPKILRA…TSHVSMPQYV (224 aa)).

As to quaternary structure, the mature envelope protein (Env) consists of a trimer of SU-TM heterodimers attached by noncovalent interactions or by a labile interchain disulfide bond. Post-translationally, specific enzymatic cleavages in vivo yield mature proteins. Envelope glycoproteins are synthesized as an inactive precursor that is N-glycosylated and processed likely by host cell furin or by a furin-like protease in the Golgi to yield the mature SU and TM proteins. The cleavage site between SU and TM requires the minimal sequence [KR]-X-[KR]-R.

It localises to the virion membrane. Its subcellular location is the host cell membrane. Functionally, the surface protein (SU) attaches the virus to the host cell by binding to its receptor. This interaction triggers the refolding of the transmembrane protein (TM) and is thought to activate its fusogenic potential by unmasking its fusion peptide. Fusion occurs at the host cell plasma membrane. Its function is as follows. The transmembrane protein (TM) acts as a class I viral fusion protein. Under the current model, the protein has at least 3 conformational states: pre-fusion native state, pre-hairpin intermediate state, and post-fusion hairpin state. During viral and target cell membrane fusion, the coiled coil regions (heptad repeats) assume a trimer-of-hairpins structure, positioning the fusion peptide in close proximity to the C-terminal region of the ectodomain. The formation of this structure appears to drive apposition and subsequent fusion of viral and target cell membranes. Membranes fusion leads to delivery of the nucleocapsid into the cytoplasm. The polypeptide is Envelope glycoprotein (env) (Equus asinus (Donkey)).